The following is a 103-amino-acid chain: MNEDQEQITLVDENGNEELYDVLFTFESDDFGKSYILIYPAGKSDDEEVDIQAYALPADDDPANPSGGDLQLIESDEEWDMVESVLNTFLADGTIDPNAGSKD.

It belongs to the UPF0473 family.

This is UPF0473 protein LVIS_1220 from Levilactobacillus brevis (strain ATCC 367 / BCRC 12310 / CIP 105137 / JCM 1170 / LMG 11437 / NCIMB 947 / NCTC 947) (Lactobacillus brevis).